We begin with the raw amino-acid sequence, 419 residues long: Acyl-[acyl-carrier-protein] desaturase 6, chloroplastic (419 aa).

Residues 1–54 (MAATATMAMPLANRLRCKPNTNSSSPSRTLFGRRVTMISSSRWGSAVSGSAIMS) constitute a chloroplast transit peptide. Residues E151, E189, H192, E242, E277, and H280 each contribute to the Fe cation site.

This sequence belongs to the fatty acid desaturase type 2 family. In terms of assembly, homodimer. The cofactor is Fe(2+).

Its subcellular location is the plastid. It localises to the chloroplast. Its pathway is lipid metabolism; fatty acid metabolism. Introduces a cis double bond in the acyl chain of an acyl-[acyl-carrier protein]. The polypeptide is Acyl-[acyl-carrier-protein] desaturase 6, chloroplastic (Oryza sativa subsp. japonica (Rice)).